The chain runs to 76 residues: ATP synthase subunit c (76 aa).

2 consecutive transmembrane segments (helical) span residues 5–25 (GIIA…GIGI) and 54–74 (AALA…LVFL).

It belongs to the ATPase C chain family. As to quaternary structure, F-type ATPases have 2 components, F(1) - the catalytic core - and F(0) - the membrane proton channel. F(1) has five subunits: alpha(3), beta(3), gamma(1), delta(1), epsilon(1). F(0) has three main subunits: a(1), b(2) and c(10-14). The alpha and beta chains form an alternating ring which encloses part of the gamma chain. F(1) is attached to F(0) by a central stalk formed by the gamma and epsilon chains, while a peripheral stalk is formed by the delta and b chains.

The protein localises to the cell membrane. Functionally, f(1)F(0) ATP synthase produces ATP from ADP in the presence of a proton or sodium gradient. F-type ATPases consist of two structural domains, F(1) containing the extramembraneous catalytic core and F(0) containing the membrane proton channel, linked together by a central stalk and a peripheral stalk. During catalysis, ATP synthesis in the catalytic domain of F(1) is coupled via a rotary mechanism of the central stalk subunits to proton translocation. Its function is as follows. Key component of the F(0) channel; it plays a direct role in translocation across the membrane. A homomeric c-ring of between 10-14 subunits forms the central stalk rotor element with the F(1) delta and epsilon subunits. The sequence is that of ATP synthase subunit c from Ruminiclostridium cellulolyticum (strain ATCC 35319 / DSM 5812 / JCM 6584 / H10) (Clostridium cellulolyticum).